We begin with the raw amino-acid sequence, 85 residues long: uncharacterized protein (85 aa).

A signal peptide spans Met-1–Ser-20.

This is an uncharacterized protein from Invertebrate iridescent virus 6 (IIV-6).